Consider the following 528-residue polypeptide: GMP synthase [glutamine-hydrolyzing] (528 aa).

The 192-residue stretch at 13-204 folds into the Glutamine amidotransferase type-1 domain; it reads SILILDFGSQ…VYSIAKCKAD (192 aa). Cysteine 90 functions as the Nucleophile in the catalytic mechanism. Residues histidine 178 and glutamate 180 contribute to the active site. Residues 205-403 enclose the GMPS ATP-PPase domain; it reads WTTETFLEET…LGLPDEIIKR (199 aa). 232-238 is an ATP binding site; that stretch reads SGGVDSS.

Homodimer.

It catalyses the reaction XMP + L-glutamine + ATP + H2O = GMP + L-glutamate + AMP + diphosphate + 2 H(+). It participates in purine metabolism; GMP biosynthesis; GMP from XMP (L-Gln route): step 1/1. In terms of biological role, catalyzes the synthesis of GMP from XMP. This is GMP synthase [glutamine-hydrolyzing] from Prochlorococcus marinus subsp. pastoris (strain CCMP1986 / NIES-2087 / MED4).